A 293-amino-acid polypeptide reads, in one-letter code: Protease HtpX (293 aa).

2 helical membrane-spanning segments follow: residues 4 to 24 (IGLF…VLSL) and 38 to 58 (LTNL…ISLF). Residue H145 participates in Zn(2+) binding. E146 is an active-site residue. Zn(2+) is bound at residue H149. 2 helical membrane passes run 156–176 (ITLS…ARII) and 193–213 (IAFF…ASMI). Zn(2+) is bound at residue E222.

The protein belongs to the peptidase M48B family. It depends on Zn(2+) as a cofactor.

It is found in the cell inner membrane. In Cellvibrio japonicus (strain Ueda107) (Pseudomonas fluorescens subsp. cellulosa), this protein is Protease HtpX.